We begin with the raw amino-acid sequence, 102 residues long: Small ribosomal subunit protein uS10 (102 aa).

It belongs to the universal ribosomal protein uS10 family. In terms of assembly, part of the 30S ribosomal subunit.

In terms of biological role, involved in the binding of tRNA to the ribosomes. This chain is Small ribosomal subunit protein uS10, found in Limosilactobacillus reuteri (strain DSM 20016) (Lactobacillus reuteri).